The chain runs to 193 residues: Phosphoheptose isomerase (193 aa).

The SIS domain occupies Leu37–Gly193. Asn52–Gly54 contacts substrate. 2 residues coordinate Zn(2+): His61 and Glu65. Residues Glu65, Asn93–Asp94, Ser119–Ser121, Ser124, and Gln172 each bind substrate. 2 residues coordinate Zn(2+): Gln172 and His180.

Belongs to the SIS family. GmhA subfamily. In terms of assembly, homotetramer. Requires Zn(2+) as cofactor.

Its subcellular location is the cytoplasm. It catalyses the reaction 2 D-sedoheptulose 7-phosphate = D-glycero-alpha-D-manno-heptose 7-phosphate + D-glycero-beta-D-manno-heptose 7-phosphate. It participates in carbohydrate biosynthesis; D-glycero-D-manno-heptose 7-phosphate biosynthesis; D-glycero-alpha-D-manno-heptose 7-phosphate and D-glycero-beta-D-manno-heptose 7-phosphate from sedoheptulose 7-phosphate: step 1/1. Functionally, catalyzes the isomerization of sedoheptulose 7-phosphate in D-glycero-D-manno-heptose 7-phosphate. In Klebsiella pneumoniae subsp. pneumoniae (strain ATCC 700721 / MGH 78578), this protein is Phosphoheptose isomerase.